The following is a 158-amino-acid chain: Small ribosomal subunit protein uS7 (158 aa).

The protein belongs to the universal ribosomal protein uS7 family. As to quaternary structure, part of the 30S ribosomal subunit. Contacts proteins S9 and S11.

Functionally, one of the primary rRNA binding proteins, it binds directly to 16S rRNA where it nucleates assembly of the head domain of the 30S subunit. Is located at the subunit interface close to the decoding center, probably blocks exit of the E-site tRNA. This chain is Small ribosomal subunit protein uS7, found in Acidiphilium cryptum (strain JF-5).